The primary structure comprises 349 residues: 5-deoxyribose 1-phosphate isomerase (349 aa).

Residues 49 to 51 (RGA), arginine 92, and glutamine 199 each bind substrate. Aspartate 240 serves as the catalytic Proton donor. 250 to 251 (NK) lines the substrate pocket.

Belongs to the EIF-2B alpha/beta/delta subunits family. DrdI subfamily.

It catalyses the reaction 5-deoxy-alpha-D-ribose 1-phosphate = 5-deoxy-D-ribulose 1-phosphate. It functions in the pathway carbohydrate degradation. Its function is as follows. Catalyzes the isomerization of 5-deoxy-alpha-D-ribose 1-phosphate to 5-deoxy-D-ribulose 1-phosphate, as part of a 5-deoxyribose salvage pathway that recycles this toxic radical SAM enzyme by-product to mainstream metabolites. In Clostridium botulinum (strain Kyoto / Type A2), this protein is 5-deoxyribose 1-phosphate isomerase.